The primary structure comprises 545 residues: Tyrosine decarboxylase 2 (545 aa).

A compositionally biased stretch (gly residues) spans 23-44; it reads GYTNGNGHTNGNGNYNGNGHVN. Residues 23–45 are disordered; the sequence is GYTNGNGHTNGNGNYNGNGHVNG. L-tyrosine-binding residues include His-245 and His-360. Lys-361 carries the N6-(pyridoxal phosphate)lysine modification. Tyr-390 lines the L-tyrosine pocket.

It belongs to the group II decarboxylase family. Homotetramer. Pyridoxal 5'-phosphate serves as cofactor. As to expression, expressed specifically in flowers.

The protein localises to the cytoplasm. It carries out the reaction L-tyrosine + H(+) = tyramine + CO2. Converts tyrosine into tyramine, a precursor of isoquinoline alkaloids and various amides. The sequence is that of Tyrosine decarboxylase 2 from Arabidopsis thaliana (Mouse-ear cress).